The sequence spans 68 residues: Large ribosomal subunit protein uL29 (68 aa).

Belongs to the universal ribosomal protein uL29 family.

The sequence is that of Large ribosomal subunit protein uL29 from Limosilactobacillus fermentum (strain NBRC 3956 / LMG 18251) (Lactobacillus fermentum).